A 779-amino-acid polypeptide reads, in one-letter code: Lon protease (779 aa).

Residues 10 to 203 (LPLLPLRGLL…ILLTILNNER (194 aa)) enclose the Lon N-terminal domain. 355–362 (GPPGVGKT) serves as a coordination point for ATP. Residues 591 to 772 (KDQVGSVTGL…DEVLRHALTK (182 aa)) enclose the Lon proteolytic domain. Catalysis depends on residues serine 678 and lysine 721.

The protein belongs to the peptidase S16 family. As to quaternary structure, homohexamer. Organized in a ring with a central cavity.

It is found in the cytoplasm. The catalysed reaction is Hydrolysis of proteins in presence of ATP.. Functionally, ATP-dependent serine protease that mediates the selective degradation of mutant and abnormal proteins as well as certain short-lived regulatory proteins. Required for cellular homeostasis and for survival from DNA damage and developmental changes induced by stress. Degrades polypeptides processively to yield small peptide fragments that are 5 to 10 amino acids long. Binds to DNA in a double-stranded, site-specific manner. The polypeptide is Lon protease (Brevibacillus choshinensis).